The primary structure comprises 126 residues: Fluoride-specific ion channel FluC (126 aa).

4 helical membrane-spanning segments follow: residues 3-23 (PLGF…RWGL), 36-56 (YGTL…VGFF), 68-88 (LLAI…SSEA), and 99-119 (WALL…ALGL). Residues Gly76 and Thr79 each contribute to the Na(+) site.

It belongs to the fluoride channel Fluc/FEX (TC 1.A.43) family.

It localises to the cell inner membrane. It catalyses the reaction fluoride(in) = fluoride(out). With respect to regulation, na(+) is not transported, but it plays an essential structural role and its presence is essential for fluoride channel function. Functionally, fluoride-specific ion channel. Important for reducing fluoride concentration in the cell, thus reducing its toxicity. In Cupriavidus pinatubonensis (strain JMP 134 / LMG 1197) (Cupriavidus necator (strain JMP 134)), this protein is Fluoride-specific ion channel FluC.